A 226-amino-acid chain; its full sequence is Small ribosomal subunit protein uS5 (226 aa).

A disordered region spans residues 1-71; that stretch reads MEDIKHNKKP…RKNEKRTKSE (71 aa). A compositionally biased stretch (low complexity) spans 24–54; sequence ANPQANHANPNNRSASVNNNSVNNNKKNSSR. Residues 72 to 135 enclose the S5 DRBM domain; the sequence is FEEKIVKISR…KMAENNVQKI (64 aa).

This sequence belongs to the universal ribosomal protein uS5 family. In terms of assembly, part of the 30S ribosomal subunit. Contacts proteins S4 and S8.

Functionally, with S4 and S12 plays an important role in translational accuracy. In terms of biological role, located at the back of the 30S subunit body where it stabilizes the conformation of the head with respect to the body. This is Small ribosomal subunit protein uS5 from Mycoplasmoides gallisepticum (strain R(low / passage 15 / clone 2)) (Mycoplasma gallisepticum).